The following is a 428-amino-acid chain: 3-phosphoshikimate 1-carboxyvinyltransferase (428 aa).

The 3-phosphoshikimate site is built by lysine 23, serine 24, and arginine 28. Lysine 23 contributes to the phosphoenolpyruvate binding site. Glycine 97 and arginine 125 together coordinate phosphoenolpyruvate. 3-phosphoshikimate is bound by residues serine 170, serine 171, glutamine 172, serine 198, aspartate 314, asparagine 337, and lysine 341. Glutamine 172 contacts phosphoenolpyruvate. The active-site Proton acceptor is aspartate 314. Positions 345, 387, and 412 each coordinate phosphoenolpyruvate.

Belongs to the EPSP synthase family. As to quaternary structure, monomer.

The protein localises to the cytoplasm. The enzyme catalyses 3-phosphoshikimate + phosphoenolpyruvate = 5-O-(1-carboxyvinyl)-3-phosphoshikimate + phosphate. It functions in the pathway metabolic intermediate biosynthesis; chorismate biosynthesis; chorismate from D-erythrose 4-phosphate and phosphoenolpyruvate: step 6/7. Its function is as follows. Catalyzes the transfer of the enolpyruvyl moiety of phosphoenolpyruvate (PEP) to the 5-hydroxyl of shikimate-3-phosphate (S3P) to produce enolpyruvyl shikimate-3-phosphate and inorganic phosphate. The protein is 3-phosphoshikimate 1-carboxyvinyltransferase of Buchnera aphidicola subsp. Schizaphis graminum (strain Sg).